A 233-amino-acid chain; its full sequence is Pyridoxal 5'-phosphate synthase subunit PdxT (233 aa).

Glycine 61–serine 63 serves as a coordination point for L-glutamine. Catalysis depends on cysteine 93, which acts as the Nucleophile. Residues arginine 127 and isoleucine 163 to arginine 164 contribute to the L-glutamine site. Residues histidine 212 and glutamate 214 each act as charge relay system in the active site.

It belongs to the glutaminase PdxT/SNO family. In terms of assembly, in the presence of PdxS, forms a dodecamer of heterodimers. Only shows activity in the heterodimer.

The enzyme catalyses aldehydo-D-ribose 5-phosphate + D-glyceraldehyde 3-phosphate + L-glutamine = pyridoxal 5'-phosphate + L-glutamate + phosphate + 3 H2O + H(+). It carries out the reaction L-glutamine + H2O = L-glutamate + NH4(+). The protein operates within cofactor biosynthesis; pyridoxal 5'-phosphate biosynthesis. In terms of biological role, catalyzes the hydrolysis of glutamine to glutamate and ammonia as part of the biosynthesis of pyridoxal 5'-phosphate. The resulting ammonia molecule is channeled to the active site of PdxS. The protein is Pyridoxal 5'-phosphate synthase subunit PdxT of Paenarthrobacter aurescens (strain TC1).